Reading from the N-terminus, the 129-residue chain is RxLR effector protein PexRD43 (129 aa).

The first 16 residues, 1 to 16, serve as a signal peptide directing secretion; that stretch reads MRLAMILLSIPLFVSG. The RxLR-dEER motif lies at 44–56; that stretch reads RSLRTSGEANEER.

Belongs to the RxLR effector family.

It localises to the secreted. It is found in the host cytoplasm. The protein localises to the host nucleus. Functionally, effector that enhances P.infestans colonization of Nicotiana benthamiana leaves. The sequence is that of RxLR effector protein PexRD43 from Phytophthora infestans (strain T30-4) (Potato late blight agent).